Reading from the N-terminus, the 85-residue chain is Large ribosomal subunit protein bL31B (85 aa).

It belongs to the bacterial ribosomal protein bL31 family. Type B subfamily. In terms of assembly, part of the 50S ribosomal subunit.

The sequence is that of Large ribosomal subunit protein bL31B from Staphylococcus saprophyticus subsp. saprophyticus (strain ATCC 15305 / DSM 20229 / NCIMB 8711 / NCTC 7292 / S-41).